Here is a 107-residue protein sequence, read N- to C-terminus: Large ribosomal subunit protein uL24 (107 aa).

It belongs to the universal ribosomal protein uL24 family. As to quaternary structure, part of the 50S ribosomal subunit.

Functionally, one of two assembly initiator proteins, it binds directly to the 5'-end of the 23S rRNA, where it nucleates assembly of the 50S subunit. Its function is as follows. One of the proteins that surrounds the polypeptide exit tunnel on the outside of the subunit. This is Large ribosomal subunit protein uL24 from Mesomycoplasma hyopneumoniae (strain 7448) (Mycoplasma hyopneumoniae).